The chain runs to 145 residues: MQMDHKQVMRALPHSYPFLLVDKVTECIPGECIVAVKNVTFNEPFFVGHFPGNPIMPGVLIVEALAQASMLCVVCDADGESTGDTSVLFMSIDSARFRKVVVPGDVLVLKSSVCHRRGNSCRFDCRAYVEDVLVTEAQILAMMNK.

The active site involves histidine 49.

This sequence belongs to the thioester dehydratase family. FabZ subfamily.

The protein localises to the cytoplasm. It catalyses the reaction a (3R)-hydroxyacyl-[ACP] = a (2E)-enoyl-[ACP] + H2O. Its function is as follows. Involved in unsaturated fatty acids biosynthesis. Catalyzes the dehydration of short chain beta-hydroxyacyl-ACPs and long chain saturated and unsaturated beta-hydroxyacyl-ACPs. The chain is 3-hydroxyacyl-[acyl-carrier-protein] dehydratase FabZ from Anaplasma phagocytophilum (strain HZ).